Reading from the N-terminus, the 300-residue chain is MEPPMEPSGGEQEPGAVRFLDLPWEDVLLPHVLNRVPLRQLLRLQRVSRAFRSLVQLHLAGLRRFDAAQVGPQIPRAALARLLRDAEGLQELALAPCHEWLSDEDLVPVLARNPQLRSVALGGCGQLSRRALGALAEGCPRLQRLSLAHCDWVDGLALRGLADRCPALEELDLTACRQLKDEAIVYLAQRRGAGLRSLSLAVNANVGDAAVQELARNCPELHHLDLTGCLRVGSDGVRTLAEYCPVLRSLRVRHCHHVAESSLSRLRKRGVDIDVEPPLHQALVLLQDMAGFAPFVNLQV.

Met-1 carries the N-acetylmethionine modification. Residues 19–66 enclose the F-box domain; the sequence is FLDLPWEDVLLPHVLNRVPLRQLLRLQRVSRAFRSLVQLHLAGLRRFD. The tract at residues 113 to 269 is interaction with SMURF1; it reads NPQLRSVALG…ESSLSRLRKR (157 aa). LRR repeat units lie at residues 141 to 162, 167 to 188, 194 to 215, 220 to 241, and 246 to 267; these read RLQR…RGLA, ALEE…VYLA, GLRS…QELA, ELHH…RTLA, and VLRS…SRLR.

The protein belongs to the FBXL15 family. In terms of assembly, part of the SCF (SKP1-CUL1-F-box) E3 ubiquitin-protein ligase complex SCF(FBXL15) composed of CUL1, SKP1, RBX1 and FBXL15.

The protein resides in the cytoplasm. It participates in protein modification; protein ubiquitination. Substrate recognition component of a SCF (SKP1-CUL1-F-box protein) E3 ubiquitin-protein ligase complex which mediates the ubiquitination and subsequent proteasomal degradation of SMURF1, thereby acting as a positive regulator of the BMP signaling pathway. Required for dorsal/ventral pattern formation and bone mass maintenance. Also mediates ubiquitination of SMURF2 and WWP2. This is F-box/LRR-repeat protein 15 (FBXL15) from Homo sapiens (Human).